The following is a 381-amino-acid chain: Protein YkfC (381 aa).

The Reverse transcriptase domain maps to 72–337; that stretch reads LRDELLSGHY…DGFIFLGHRL (266 aa). Mg(2+) is bound by residues Asp-166, Asp-284, and Asp-285.

It belongs to the bacterial reverse transcriptase family.

The protein is Protein YkfC (ykfC) of Escherichia coli (strain K12).